The sequence spans 436 residues: Gamma-glutamyl phosphate reductase (436 aa).

This sequence belongs to the gamma-glutamyl phosphate reductase family.

It is found in the cytoplasm. The catalysed reaction is L-glutamate 5-semialdehyde + phosphate + NADP(+) = L-glutamyl 5-phosphate + NADPH + H(+). It participates in amino-acid biosynthesis; L-proline biosynthesis; L-glutamate 5-semialdehyde from L-glutamate: step 2/2. Catalyzes the NADPH-dependent reduction of L-glutamate 5-phosphate into L-glutamate 5-semialdehyde and phosphate. The product spontaneously undergoes cyclization to form 1-pyrroline-5-carboxylate. The sequence is that of Gamma-glutamyl phosphate reductase from Prochlorococcus marinus subsp. pastoris (strain CCMP1986 / NIES-2087 / MED4).